The following is a 143-amino-acid chain: Large-conductance mechanosensitive channel (143 aa).

2 helical membrane-spanning segments follow: residues 10 to 30 (FAVK…GAFS) and 89 to 109 (GSFI…FLMV).

Belongs to the MscL family. Homopentamer.

It localises to the cell inner membrane. Channel that opens in response to stretch forces in the membrane lipid bilayer. May participate in the regulation of osmotic pressure changes within the cell. The chain is Large-conductance mechanosensitive channel from Burkholderia multivorans (strain ATCC 17616 / 249).